The primary structure comprises 341 residues: Thymidine kinase (341 aa).

An ATP-binding site is contributed by 19–26 (GAYGIGKT). The Proton acceptor role is filled by Glu48. Substrate is bound by residues Tyr66 and Gln90. Arg183 is a binding site for ATP. Arg189 serves as a coordination point for substrate.

Belongs to the herpesviridae thymidine kinase family. As to quaternary structure, homodimer.

The enzyme catalyses thymidine + ATP = dTMP + ADP + H(+). Its function is as follows. Catalyzes the transfer of the gamma-phospho group of ATP to thymidine to generate dTMP in the salvage pathway of pyrimidine synthesis. The dTMP serves as a substrate for DNA polymerase during viral DNA replication. Allows the virus to be reactivated and to grow in non-proliferative cells lacking a high concentration of phosphorylated nucleic acid precursors. This Varicella-zoster virus (strain Dumas) (HHV-3) protein is Thymidine kinase.